The chain runs to 286 residues: uncharacterized protein (286 aa).

A disordered region spans residues methionine 1–alanine 47. Over residues glycine 9–asparagine 26 the composition is skewed to basic and acidic residues. Glycine 93 to threonine 100 is a GTP binding site.

This sequence belongs to the SIMIBI class G3E GTPase family. UreG subfamily.

It localises to the cytoplasm. The protein localises to the nucleus. Its function is as follows. Probably facilitates nickel incorporation. This is an uncharacterized protein from Schizosaccharomyces pombe (strain 972 / ATCC 24843) (Fission yeast).